The primary structure comprises 503 residues: AMP phosphorylase (503 aa).

AMP contacts are provided by residues Gly168, 194-199 (SRAITS), and Thr203. Catalysis depends on Asp256, which acts as the Proton donor. Ser264 and Lys288 together coordinate AMP.

Belongs to the thymidine/pyrimidine-nucleoside phosphorylase family. Type 2 subfamily.

The catalysed reaction is AMP + phosphate = alpha-D-ribose 1,5-bisphosphate + adenine. It catalyses the reaction CMP + phosphate = cytosine + alpha-D-ribose 1,5-bisphosphate. The enzyme catalyses UMP + phosphate = alpha-D-ribose 1,5-bisphosphate + uracil. In terms of biological role, catalyzes the conversion of AMP and phosphate to adenine and ribose 1,5-bisphosphate (R15P). Exhibits phosphorylase activity toward CMP and UMP in addition to AMP. Functions in an archaeal AMP degradation pathway, together with R15P isomerase and RubisCO. This chain is AMP phosphorylase, found in Pyrococcus furiosus (strain ATCC 43587 / DSM 3638 / JCM 8422 / Vc1).